The sequence spans 226 residues: PKHD-type hydroxylase PFL_0865 (226 aa).

The Fe2OG dioxygenase domain occupies 78-178 (KVFPPLINCY…RYASFFWTQS (101 aa)). 3 residues coordinate Fe cation: H96, D98, and H159. R169 is a binding site for 2-oxoglutarate.

Requires Fe(2+) as cofactor. The cofactor is L-ascorbate.

The polypeptide is PKHD-type hydroxylase PFL_0865 (Pseudomonas fluorescens (strain ATCC BAA-477 / NRRL B-23932 / Pf-5)).